Consider the following 370-residue polypeptide: Cobalt-precorrin-5B C(1)-methyltransferase (370 aa).

It belongs to the CbiD family.

The enzyme catalyses Co-precorrin-5B + S-adenosyl-L-methionine = Co-precorrin-6A + S-adenosyl-L-homocysteine. It functions in the pathway cofactor biosynthesis; adenosylcobalamin biosynthesis; cob(II)yrinate a,c-diamide from sirohydrochlorin (anaerobic route): step 6/10. In terms of biological role, catalyzes the methylation of C-1 in cobalt-precorrin-5B to form cobalt-precorrin-6A. The polypeptide is Cobalt-precorrin-5B C(1)-methyltransferase (Pseudomonas syringae pv. tomato (strain ATCC BAA-871 / DC3000)).